The primary structure comprises 169 residues: MPEVDRFGRLPWLWITVLVFVLDQVSKAFFQAELSMYQQVVVIPDLFSWTLAYNTGAAFSFLADSSGWQRWLFALIAIVVSAILVVWLKRLKKGETWLAVALALVLGGALGNLYDRMVLGHVVDFILVHWQNRWYFPAFNLADSAITVGAVMLALDMFRSKKSGEAAHG.

Transmembrane regions (helical) follow at residues 10-30 (LPWL…KAFF), 41-61 (VVIP…AFSF), 68-88 (WQRW…VVWL), and 94-114 (GETW…GNLY). Active-site residues include Asp124 and Asp143. The helical transmembrane segment at 135–155 (YFPAFNLADSAITVGAVMLAL) threads the bilayer.

It belongs to the peptidase A8 family.

It is found in the cell inner membrane. It carries out the reaction Release of signal peptides from bacterial membrane prolipoproteins. Hydrolyzes -Xaa-Yaa-Zaa-|-(S,diacylglyceryl)Cys-, in which Xaa is hydrophobic (preferably Leu), and Yaa (Ala or Ser) and Zaa (Gly or Ala) have small, neutral side chains.. The protein operates within protein modification; lipoprotein biosynthesis (signal peptide cleavage). In terms of biological role, this protein specifically catalyzes the removal of signal peptides from prolipoproteins. The polypeptide is Lipoprotein signal peptidase (Pseudomonas paraeruginosa (strain DSM 24068 / PA7) (Pseudomonas aeruginosa (strain PA7))).